An 81-amino-acid chain; its full sequence is Pyruvate synthase subunit PorD (81 aa).

Positions 1–20 are disordered; the sequence is MESLGATVKEPGSTRKNKTG. 2 4Fe-4S ferredoxin-type domains span residues 25–54 and 51–80; these read FKPF…KEHE and KEHE…MERE. Residues Cys-34, Cys-37, Cys-40, Cys-44, Cys-60, Cys-63, Cys-66, and Cys-70 each contribute to the [4Fe-4S] cluster site.

As to quaternary structure, heterotetramer of one alpha, one beta, one delta and one gamma chain. The cofactor is [4Fe-4S] cluster.

This Methanothermobacter marburgensis (strain ATCC BAA-927 / DSM 2133 / JCM 14651 / NBRC 100331 / OCM 82 / Marburg) (Methanobacterium thermoautotrophicum) protein is Pyruvate synthase subunit PorD (porD).